We begin with the raw amino-acid sequence, 75 residues long: Large ribosomal subunit protein bL31 (75 aa).

The protein belongs to the bacterial ribosomal protein bL31 family. Type A subfamily. In terms of assembly, part of the 50S ribosomal subunit.

Its function is as follows. Binds the 23S rRNA. This Sphingopyxis alaskensis (strain DSM 13593 / LMG 18877 / RB2256) (Sphingomonas alaskensis) protein is Large ribosomal subunit protein bL31.